We begin with the raw amino-acid sequence, 351 residues long: Protein Wnt-4 (351 aa).

An N-terminal signal peptide occupies residues 1-22 (MTPEYFLRSLLMMILAVFSANA). Disulfide bonds link Cys78/Cys89, Cys128/Cys136, Cys138/Cys155, Cys206/Cys220, Cys208/Cys215, Cys280/Cys311, Cys296/Cys306, Cys310/Cys350, Cys326/Cys341, Cys328/Cys338, and Cys333/Cys334. Asn88 carries an N-linked (GlcNAc...) asparagine glycan. Ser212 carries the O-palmitoleoyl serine; by PORCN lipid modification. Asn297 carries an N-linked (GlcNAc...) asparagine glycan.

The protein belongs to the Wnt family. Palmitoleoylation is required for efficient binding to frizzled receptors. Depalmitoleoylation leads to Wnt signaling pathway inhibition. Expressed in the brain and floor plate. In the developing pronephros, expressed in the proximal tubules and nephrostomes but absent from the pronephric duct.

It localises to the secreted. Its subcellular location is the extracellular space. The protein resides in the extracellular matrix. In terms of biological role, ligand for members of the frizzled family of seven transmembrane receptors. Plays an important role in embryonic kidney development. Acts downstream of Notch signaling during pronephric kidney development. During early pronephros development, patterns the proximal pronephric anlagen to promote glomus and nephrostome formation. Also required later in pronephros development for tubulogenesis. This is Protein Wnt-4 (wnt4) from Xenopus laevis (African clawed frog).